Consider the following 212-residue polypeptide: Leucyl/phenylalanyl-tRNA--protein transferase (212 aa).

This sequence belongs to the L/F-transferase family.

The protein localises to the cytoplasm. It carries out the reaction N-terminal L-lysyl-[protein] + L-leucyl-tRNA(Leu) = N-terminal L-leucyl-L-lysyl-[protein] + tRNA(Leu) + H(+). The enzyme catalyses N-terminal L-arginyl-[protein] + L-leucyl-tRNA(Leu) = N-terminal L-leucyl-L-arginyl-[protein] + tRNA(Leu) + H(+). It catalyses the reaction L-phenylalanyl-tRNA(Phe) + an N-terminal L-alpha-aminoacyl-[protein] = an N-terminal L-phenylalanyl-L-alpha-aminoacyl-[protein] + tRNA(Phe). Its function is as follows. Functions in the N-end rule pathway of protein degradation where it conjugates Leu, Phe and, less efficiently, Met from aminoacyl-tRNAs to the N-termini of proteins containing an N-terminal arginine or lysine. This is Leucyl/phenylalanyl-tRNA--protein transferase from Christiangramia forsetii (strain DSM 17595 / CGMCC 1.15422 / KT0803) (Gramella forsetii).